The chain runs to 343 residues: D-erythrose-4-phosphate dehydrogenase (343 aa).

An NAD(+)-binding site is contributed by 12–13 (RI). Substrate contacts are provided by residues 154-156 (SCT), arginine 200, 213-214 (TK), and arginine 236. Cysteine 155 (nucleophile) is an active-site residue. Asparagine 318 contacts NAD(+).

The protein belongs to the glyceraldehyde-3-phosphate dehydrogenase family. Epd subfamily. In terms of assembly, homotetramer.

It localises to the cytoplasm. It carries out the reaction D-erythrose 4-phosphate + NAD(+) + H2O = 4-phospho-D-erythronate + NADH + 2 H(+). The protein operates within cofactor biosynthesis; pyridoxine 5'-phosphate biosynthesis; pyridoxine 5'-phosphate from D-erythrose 4-phosphate: step 1/5. Functionally, catalyzes the NAD-dependent conversion of D-erythrose 4-phosphate to 4-phosphoerythronate. In Pseudoalteromonas translucida (strain TAC 125), this protein is D-erythrose-4-phosphate dehydrogenase.